A 768-amino-acid chain; its full sequence is C-type polyheme cytochrome OmcC (768 aa).

The signal sequence occupies residues 1–23 (MSRKVTKYSAVLAVSLFAAALAG). C24 carries the N-palmitoyl cysteine lipid modification. The S-diacylglycerol cysteine moiety is linked to residue C24. Residues C48, C51, H52, C80, C83, H84, C112, C115, H116, C148, C151, H152, C193, C196, H197, C238, C241, H242, C320, C323, H324, C405, C408, H409, C454, C457, H458, C504, C507, H508, C579, C582, H583, C611, C614, and H615 each contribute to the heme c site.

Post-translationally, binds 12 heme c groups per subunit.

It is found in the cell outer membrane. Its function is as follows. Not involved in Fe(3+) reduction. This chain is C-type polyheme cytochrome OmcC (omcC), found in Geobacter sulfurreducens (strain ATCC 51573 / DSM 12127 / PCA).